A 335-amino-acid polypeptide reads, in one-letter code: Phosphatidylglycerol--prolipoprotein diacylglyceryl transferase (335 aa).

Transmembrane regions (helical) follow at residues 31–51, 67–87, and 100–120; these read IYWY…TYSL, YIFL…LAIG, and LAIQ…FPLI. Arg-163 serves as a coordination point for a 1,2-diacyl-sn-glycero-3-phospho-(1'-sn-glycerol). The next 3 membrane-spanning stretches (helical) occupy residues 213–233, 235–255, and 277–297; these read PLFL…YFGL, YIKQ…YGVT, and SLLL…APLL.

Belongs to the Lgt family.

The protein resides in the cell membrane. The catalysed reaction is L-cysteinyl-[prolipoprotein] + a 1,2-diacyl-sn-glycero-3-phospho-(1'-sn-glycerol) = an S-1,2-diacyl-sn-glyceryl-L-cysteinyl-[prolipoprotein] + sn-glycerol 1-phosphate + H(+). It functions in the pathway protein modification; lipoprotein biosynthesis (diacylglyceryl transfer). Catalyzes the transfer of the diacylglyceryl group from phosphatidylglycerol to the sulfhydryl group of the N-terminal cysteine of a prolipoprotein, the first step in the formation of mature lipoproteins. This Ureaplasma parvum serovar 3 (strain ATCC 27815 / 27 / NCTC 11736) protein is Phosphatidylglycerol--prolipoprotein diacylglyceryl transferase.